The primary structure comprises 311 residues: 1D-myo-inositol 2-acetamido-2-deoxy-alpha-D-glucopyranoside deacetylase (311 aa).

Zn(2+) contacts are provided by histidine 29, aspartate 32, and histidine 162.

The protein belongs to the MshB deacetylase family. It depends on Zn(2+) as a cofactor.

The enzyme catalyses 1D-myo-inositol 2-acetamido-2-deoxy-alpha-D-glucopyranoside + H2O = 1D-myo-inositol 2-amino-2-deoxy-alpha-D-glucopyranoside + acetate. In terms of biological role, catalyzes the deacetylation of 1D-myo-inositol 2-acetamido-2-deoxy-alpha-D-glucopyranoside (GlcNAc-Ins) in the mycothiol biosynthesis pathway. This Corynebacterium efficiens (strain DSM 44549 / YS-314 / AJ 12310 / JCM 11189 / NBRC 100395) protein is 1D-myo-inositol 2-acetamido-2-deoxy-alpha-D-glucopyranoside deacetylase.